We begin with the raw amino-acid sequence, 482 residues long: UDP-N-acetylmuramoyl-L-alanyl-D-glutamate--2,6-diaminopimelate ligase 1 (482 aa).

S30 is a binding site for UDP-N-acetyl-alpha-D-muramoyl-L-alanyl-D-glutamate. 110–116 is a binding site for ATP; sequence GTNGKTT. UDP-N-acetyl-alpha-D-muramoyl-L-alanyl-D-glutamate-binding positions include 152–153, S179, and R187; that span reads TT. K219 bears the N6-carboxylysine mark. Meso-2,6-diaminopimelate-binding positions include R378, 402–405, G452, and E456; that span reads DNPR. The Meso-diaminopimelate recognition motif signature appears at 402-405; it reads DNPR.

It belongs to the MurCDEF family. MurE subfamily. Mg(2+) is required as a cofactor. Post-translationally, carboxylation is probably crucial for Mg(2+) binding and, consequently, for the gamma-phosphate positioning of ATP.

It localises to the cytoplasm. The enzyme catalyses UDP-N-acetyl-alpha-D-muramoyl-L-alanyl-D-glutamate + meso-2,6-diaminopimelate + ATP = UDP-N-acetyl-alpha-D-muramoyl-L-alanyl-gamma-D-glutamyl-meso-2,6-diaminopimelate + ADP + phosphate + H(+). It participates in cell wall biogenesis; peptidoglycan biosynthesis. Its function is as follows. Catalyzes the addition of meso-diaminopimelic acid to the nucleotide precursor UDP-N-acetylmuramoyl-L-alanyl-D-glutamate (UMAG) in the biosynthesis of bacterial cell-wall peptidoglycan. This is UDP-N-acetylmuramoyl-L-alanyl-D-glutamate--2,6-diaminopimelate ligase 1 from Clostridium acetobutylicum (strain ATCC 824 / DSM 792 / JCM 1419 / IAM 19013 / LMG 5710 / NBRC 13948 / NRRL B-527 / VKM B-1787 / 2291 / W).